Consider the following 198-residue polypeptide: Nucleoside triphosphate pyrophosphatase (198 aa).

Residue Asp74 is the Proton acceptor of the active site.

The protein belongs to the Maf family. Requires a divalent metal cation as cofactor.

It localises to the cytoplasm. The catalysed reaction is a ribonucleoside 5'-triphosphate + H2O = a ribonucleoside 5'-phosphate + diphosphate + H(+). The enzyme catalyses a 2'-deoxyribonucleoside 5'-triphosphate + H2O = a 2'-deoxyribonucleoside 5'-phosphate + diphosphate + H(+). Nucleoside triphosphate pyrophosphatase. May have a dual role in cell division arrest and in preventing the incorporation of modified nucleotides into cellular nucleic acids. The protein is Nucleoside triphosphate pyrophosphatase of Sphingopyxis alaskensis (strain DSM 13593 / LMG 18877 / RB2256) (Sphingomonas alaskensis).